The primary structure comprises 441 residues: Ribosomal protein uS12 methylthiotransferase RimO (441 aa).

Positions proline 7–proline 117 constitute an MTTase N-terminal domain. Residues cysteine 16, cysteine 52, cysteine 81, cysteine 148, cysteine 152, and cysteine 155 each coordinate [4Fe-4S] cluster. The Radical SAM core domain occupies leucine 134–arginine 371. The TRAM domain maps to lysine 374–glycine 440.

It belongs to the methylthiotransferase family. RimO subfamily. It depends on [4Fe-4S] cluster as a cofactor.

It localises to the cytoplasm. The enzyme catalyses L-aspartate(89)-[ribosomal protein uS12]-hydrogen + (sulfur carrier)-SH + AH2 + 2 S-adenosyl-L-methionine = 3-methylsulfanyl-L-aspartate(89)-[ribosomal protein uS12]-hydrogen + (sulfur carrier)-H + 5'-deoxyadenosine + L-methionine + A + S-adenosyl-L-homocysteine + 2 H(+). Catalyzes the methylthiolation of an aspartic acid residue of ribosomal protein uS12. In Bradyrhizobium sp. (strain BTAi1 / ATCC BAA-1182), this protein is Ribosomal protein uS12 methylthiotransferase RimO.